The sequence spans 488 residues: Sucrose phosphorylase (488 aa).

Residues Asp-50, His-88, 191 to 193, Glu-233, 290 to 291, 341 to 344, and Arg-398 each bind sucrose; these read RLD, HD, and DLYQ. Asp-193 acts as the Nucleophile in catalysis. The active-site Proton donor is Glu-233.

Belongs to the glycosyl hydrolase 13 family. Sucrose phosphorylase subfamily.

The catalysed reaction is sucrose + phosphate = D-fructose + alpha-D-glucose 1-phosphate. This Agrobacterium vitis (Rhizobium vitis) protein is Sucrose phosphorylase.